Consider the following 299-residue polypeptide: 4-hydroxybenzoate octaprenyltransferase (299 aa).

A run of 7 helical transmembrane segments spans residues 31–51 (IGIYLVLWPTLWSLWIAADGL), 54–74 (WDVLVIFVLGVVLMRSAGCVI), 105–125 (VLFFVALLVIAFILVLFTNPL), 148–168 (QLPQIVLGAAFAWSIPMAFAA), 177–197 (IWVLYTAVVLWTVAYDTFYAM), 241–261 (FGLGFSFKVSLLVAGGLFAYQ), and 277–297 (FLHNNWVGLVVFLGILVDKLI).

This sequence belongs to the UbiA prenyltransferase family. It depends on Mg(2+) as a cofactor.

It is found in the cell inner membrane. It carries out the reaction all-trans-octaprenyl diphosphate + 4-hydroxybenzoate = 4-hydroxy-3-(all-trans-octaprenyl)benzoate + diphosphate. It functions in the pathway cofactor biosynthesis; ubiquinone biosynthesis. Catalyzes the prenylation of para-hydroxybenzoate (PHB) with an all-trans polyprenyl group. Mediates the second step in the final reaction sequence of ubiquinone-8 (UQ-8) biosynthesis, which is the condensation of the polyisoprenoid side chain with PHB, generating the first membrane-bound Q intermediate 3-octaprenyl-4-hydroxybenzoate. This is 4-hydroxybenzoate octaprenyltransferase from Saccharophagus degradans (strain 2-40 / ATCC 43961 / DSM 17024).